Reading from the N-terminus, the 517-residue chain is Transmembrane protein 180 (517 aa).

Residues 1–11 are Extracellular-facing; it reads MRLGGPWAWLL. Residues 12–43 traverse the membrane as a helical segment; it reads GLPTAVVYGSLALFVSVLHNVFLLYYVDTFVS. At 44 to 55 the chain is on the cytoplasmic side; sequence VYKIDKAAFWVG. The helical transmembrane segment at 56–74 threads the bilayer; the sequence is ETVFLLWNSLNDPLFGWLS. The Extracellular segment spans residues 75–100; the sequence is DRQFLSSQPRSGAGLSSRAVVLARVR. A helical transmembrane segment spans residues 101–118; sequence ALGWHGPLLALSFLAFWV. Over 119 to 126 the chain is Cytoplasmic; sequence PWAPAGLQ. A helical membrane pass occupies residues 127–151; the sequence is FLLCLCLYDGFLTLVDLHHHALLAD. The Extracellular portion of the chain corresponds to 152 to 155; that stretch reads LALS. Residues 156–179 form a helical membrane-spanning segment; the sequence is AHDRTHLNFYCSLFSAAGSLSVFA. The Cytoplasmic portion of the chain corresponds to 180 to 191; the sequence is SYAFWNKEDFSS. A helical transmembrane segment spans residues 192 to 223; it reads FRAFCLALATGSGLGFVGAARLLRRRVEAAGR. The Extracellular segment spans residues 224–264; sequence EPGCPAMAVNDGLCEEELLVGGEEAGSITLGQYLQQLARHR. The chain crosses the membrane as a helical span at residues 265 to 292; it reads NFLWFVGMDLVQVFHCHFNSNFFPLFLE. The Cytoplasmic portion of the chain corresponds to 293–305; that stretch reads HLLSDHISLSTGS. A helical membrane pass occupies residues 306-325; that stretch reads FLLGISYVAPHLNNLYFLPL. At 326–330 the chain is on the extracellular side; that stretch reads CRRWG. A helical transmembrane segment spans residues 331–350; that stretch reads VYAVVRGLFLLKLGLSLLML. At 351-358 the chain is on the cytoplasmic side; it reads LAGPDHPG. The chain crosses the membrane as a helical span at residues 359 to 393; sequence LLCLFIASNRVFTEGTCKLLTLVVTDLVDEDLVLN. Residues 394-402 are Extracellular-facing; it reads HRKQAASAL. The helical transmembrane segment at 403–429 threads the bilayer; it reads LFGMVALVTKPGQTFAPLLGTWLLCFY. Residues 430-466 lie on the Cytoplasmic side of the membrane; the sequence is TGHDLFQQHPPAPVGSAQPWPEPPAPPPAQAPPLRQG. Residues 467-485 traverse the membrane as a helical segment; sequence CFYLLVLVPIACALLQLFT. The Extracellular portion of the chain corresponds to 486–517; that stretch reads WSQFTLHGRRLHMVKAQRQSLSRAQTLDVKMV.

It localises to the cell membrane. This chain is Transmembrane protein 180, found in Bos taurus (Bovine).